We begin with the raw amino-acid sequence, 370 residues long: Succinoglycan biosynthesis protein ExoH (370 aa).

Helical transmembrane passes span Ile14–Phe34, Val46–Tyr66, Thr88–Gln108, Leu144–Val164, Val170–Lys190, Ile193–Leu213, Phe216–Tyr236, Leu244–Ile264, Gly282–Trp302, and Leu307–Ala327. The disordered stretch occupies residues Ala350–Arg370.

The protein belongs to the acyltransferase 3 family.

Its subcellular location is the cell membrane. It participates in glycan metabolism; exopolysaccharide biosynthesis. Its function is as follows. Required for the succinyl modification of the seventh sugar (glucose) of the octasaccharide subunit of succinoglycan (EPS I). The polypeptide is Succinoglycan biosynthesis protein ExoH (exoH) (Rhizobium meliloti (strain 1021) (Ensifer meliloti)).